A 283-amino-acid polypeptide reads, in one-letter code: SNAP25 homologous protein SNAP32 (283 aa).

Disordered regions lie at residues M1–R64 and L192–S212. A compositionally biased stretch (polar residues) spans P198 to S212. The region spanning E218–L280 is the t-SNARE coiled-coil homology domain.

This sequence belongs to the SNAP-25 family. In terms of assembly, interacts with SYP121. In terms of tissue distribution, expressed in roots, culms and leaves.

The protein localises to the membrane. Its function is as follows. t-SNARE involved in diverse vesicle trafficking and membrane fusion processes. May be involved in resistance to the rice blast fungus Magnaporthe oryzae. May contribute to host resistance to rice blast through interaction with SYP121. This is SNAP25 homologous protein SNAP32 from Oryza sativa subsp. japonica (Rice).